Reading from the N-terminus, the 344-residue chain is Rho guanine nucleotide exchange factor 39 (344 aa).

Residues 22-197 form the DH domain; it reads KRVCTARELL…SETAQKVHAI (176 aa). Positions 227–331 constitute a PH domain; the sequence is WFLRQGWLLV…WHHSLTLAIR (105 aa).

It localises to the cell membrane. In terms of biological role, promotes cell proliferation. The chain is Rho guanine nucleotide exchange factor 39 (Arhgef39) from Mus musculus (Mouse).